The chain runs to 682 residues: DNA ligase (682 aa).

NAD(+) is bound by residues 42–46 (DAEYD), 91–92 (SL), and E124. Catalysis depends on K126, which acts as the N6-AMP-lysine intermediate. Residues R147, E184, K302, and K326 each contribute to the NAD(+) site. 4 residues coordinate Zn(2+): C420, C423, C438, and C444. The BRCT domain maps to 603–682 (IADNPLKGKS…QEFIALTGEN (80 aa)).

The protein belongs to the NAD-dependent DNA ligase family. LigA subfamily. Mg(2+) serves as cofactor. The cofactor is Mn(2+).

The catalysed reaction is NAD(+) + (deoxyribonucleotide)n-3'-hydroxyl + 5'-phospho-(deoxyribonucleotide)m = (deoxyribonucleotide)n+m + AMP + beta-nicotinamide D-nucleotide.. Its function is as follows. DNA ligase that catalyzes the formation of phosphodiester linkages between 5'-phosphoryl and 3'-hydroxyl groups in double-stranded DNA using NAD as a coenzyme and as the energy source for the reaction. It is essential for DNA replication and repair of damaged DNA. This is DNA ligase from Actinobacillus pleuropneumoniae serotype 7 (strain AP76).